A 158-amino-acid polypeptide reads, in one-letter code: Transcription elongation factor GreA (158 aa).

Positions 47 to 68 (AEYDAAKEAQGLLEMRIAKLEE) form a coiled coil.

This sequence belongs to the GreA/GreB family.

In terms of biological role, necessary for efficient RNA polymerase transcription elongation past template-encoded arresting sites. The arresting sites in DNA have the property of trapping a certain fraction of elongating RNA polymerases that pass through, resulting in locked ternary complexes. Cleavage of the nascent transcript by cleavage factors such as GreA or GreB allows the resumption of elongation from the new 3'terminus. GreA releases sequences of 2 to 3 nucleotides. This chain is Transcription elongation factor GreA, found in Flavobacterium johnsoniae (strain ATCC 17061 / DSM 2064 / JCM 8514 / BCRC 14874 / CCUG 350202 / NBRC 14942 / NCIMB 11054 / UW101) (Cytophaga johnsonae).